Reading from the N-terminus, the 427-residue chain is Serine hydroxymethyltransferase (427 aa).

(6S)-5,6,7,8-tetrahydrofolate contacts are provided by residues L122 and 126 to 128 (GHL). Position 231 is an N6-(pyridoxal phosphate)lysine (K231). Residue 355–357 (SPF) participates in (6S)-5,6,7,8-tetrahydrofolate binding.

The protein belongs to the SHMT family. In terms of assembly, homodimer. The cofactor is pyridoxal 5'-phosphate.

The protein resides in the cytoplasm. It carries out the reaction (6R)-5,10-methylene-5,6,7,8-tetrahydrofolate + glycine + H2O = (6S)-5,6,7,8-tetrahydrofolate + L-serine. It participates in one-carbon metabolism; tetrahydrofolate interconversion. It functions in the pathway amino-acid biosynthesis; glycine biosynthesis; glycine from L-serine: step 1/1. Its function is as follows. Catalyzes the reversible interconversion of serine and glycine with tetrahydrofolate (THF) serving as the one-carbon carrier. This reaction serves as the major source of one-carbon groups required for the biosynthesis of purines, thymidylate, methionine, and other important biomolecules. Also exhibits THF-independent aldolase activity toward beta-hydroxyamino acids, producing glycine and aldehydes, via a retro-aldol mechanism. In Nostoc punctiforme (strain ATCC 29133 / PCC 73102), this protein is Serine hydroxymethyltransferase.